A 412-amino-acid chain; its full sequence is BSD domain-containing protein 1 (412 aa).

The 53-residue stretch at 145–197 (WLSTFSLEERKAEISELLVSSPAIRALYTKMVPAAVAHAEFWQRYFYKVFQLE) folds into the BSD domain. The span at 208-217 (QRAEQTDHSE) shows a compositional bias: basic and acidic residues. 3 disordered regions span residues 208-227 (QRAE…EDEE), 253-272 (VTVA…ASLS), and 298-412 (ESVT…ENWE). Polar residues-rich tracts occupy residues 259–272 (PESS…ASLS) and 298–308 (ESVTIRVTQPS). Phosphoserine is present on Ser-308. A compositionally biased stretch (basic and acidic residues) spans 328–349 (PEERPAPREETAREDMAQDLRV). Positions 353–372 (NSDSGKSTPSNNGKKGSSTD) are enriched in polar residues. Composition is skewed to acidic residues over residues 373 to 390 (VSED…EEEV) and 400 to 412 (TEEL…ENWE).

In Danio rerio (Zebrafish), this protein is BSD domain-containing protein 1 (bsdc1).